A 494-amino-acid chain; its full sequence is NAD(P)H-quinone oxidoreductase subunit 2 B, chloroplastic (494 aa).

13 consecutive transmembrane segments (helical) span residues 6–26 (LLLF…GLIL), 39–59 (TPWF…VLLF), 81–101 (IFRF…VEYI), 106–126 (MAIT…MVLC), 131–151 (LVTI…LSGY), 166–186 (LLMG…LYGL), 211–231 (ILIA…LVPF), 277–297 (WHLL…LIAI), 305–325 (MLAY…IAGD), 336–356 (YMLF…LFGL), 377–397 (AFSL…AGFF), 413–433 (LLVS…LKII), and 468–488 (MIVC…IIAI).

Belongs to the complex I subunit 2 family. NDH is composed of at least 16 different subunits, 5 of which are encoded in the nucleus.

It is found in the plastid. It localises to the chloroplast thylakoid membrane. It catalyses the reaction a plastoquinone + NADH + (n+1) H(+)(in) = a plastoquinol + NAD(+) + n H(+)(out). The catalysed reaction is a plastoquinone + NADPH + (n+1) H(+)(in) = a plastoquinol + NADP(+) + n H(+)(out). Its function is as follows. NDH shuttles electrons from NAD(P)H:plastoquinone, via FMN and iron-sulfur (Fe-S) centers, to quinones in the photosynthetic chain and possibly in a chloroplast respiratory chain. The immediate electron acceptor for the enzyme in this species is believed to be plastoquinone. Couples the redox reaction to proton translocation, and thus conserves the redox energy in a proton gradient. In Cycas taitungensis (Prince sago), this protein is NAD(P)H-quinone oxidoreductase subunit 2 B, chloroplastic.